The chain runs to 723 residues: Peroxisomal bifunctional enzyme (723 aa).

Residues 1-282 (MAEYTRLHNA…FAERKANKWS (282 aa)) form an enoyl-CoA hydratase / isomerase region. The residue at position 38 (Lys38) is an N6-succinyllysine. Gly101 contributes to the substrate binding site. At Lys165 the chain carries N6-acetyllysine; alternate. Lys165 carries the post-translational modification N6-succinyllysine; alternate. Lys171 is modified (N6-acetyllysine). At Lys219 the chain carries N6-acetyllysine; alternate. The residue at position 219 (Lys219) is an N6-succinyllysine; alternate. N6-acetyllysine is present on Lys250. N6-succinyllysine occurs at positions 280 and 290. The segment at 283–572 (TPSGASWKTA…DVLCELGRFG (290 aa)) is 3-hydroxyacyl-CoA dehydrogenase. Lys346, Lys350, and Lys464 each carry N6-acetyllysine. Lys532 is modified (N6-succinyllysine). Phosphothreonine is present on Thr548. N6-succinyllysine is present on Lys577. An N6-acetyllysine; alternate mark is found at Lys584, Lys591, and Lys710. An N6-succinyllysine; alternate mark is found at Lys584, Lys591, and Lys710. Ser718 is modified (phosphoserine). Residues 721-723 (SKL) carry the Microbody targeting signal motif. Lys722 carries the N6-succinyllysine modification.

In the N-terminal section; belongs to the enoyl-CoA hydratase/isomerase family. This sequence in the C-terminal section; belongs to the 3-hydroxyacyl-CoA dehydrogenase family. As to quaternary structure, monomer. Post-translationally, acetylated, leading to enhanced enzyme activity. Acetylation is enhanced by up to 80% after treatment either with trichostin A (TSA) or with nicotinamide (NAM) with highest increase on Lys-346. Acetylation and enzyme activity increased by about 1.5% on addition of fatty acids. As to expression, liver and kidney. Strongly expressed in the terminal segments of the proximal tubule. Lower amounts seen in the brain.

The protein localises to the peroxisome. It catalyses the reaction a (3S)-3-hydroxyacyl-CoA = a (2E)-enoyl-CoA + H2O. The enzyme catalyses a 4-saturated-(3S)-3-hydroxyacyl-CoA = a (3E)-enoyl-CoA + H2O. It carries out the reaction a (3Z)-enoyl-CoA = a 4-saturated (2E)-enoyl-CoA. The catalysed reaction is a (3E)-enoyl-CoA = a 4-saturated (2E)-enoyl-CoA. It catalyses the reaction a (3S)-3-hydroxyacyl-CoA + NAD(+) = a 3-oxoacyl-CoA + NADH + H(+). The enzyme catalyses (2S,3S)-3-hydroxy-2-methylbutanoyl-CoA = (2E)-2-methylbut-2-enoyl-CoA + H2O. It carries out the reaction (3S)-hydroxyhexadecanoyl-CoA + NAD(+) = 3-oxohexadecanoyl-CoA + NADH + H(+). The catalysed reaction is (3S)-hydroxyhexadecanoyl-CoA = (2E)-hexadecenoyl-CoA + H2O. It catalyses the reaction (2E)-hexadecenedioyl-CoA + H2O = (3S)-hydroxyhexadecanedioyl-CoA. The enzyme catalyses (3S)-hydroxyhexadecanedioyl-CoA + NAD(+) = 3-oxohexadecanedioyl-CoA + NADH + H(+). It carries out the reaction (3E,5Z)-tetradecadienoyl-CoA = (2E,5Z)-tetradecadienoyl-CoA. The catalysed reaction is (3E,5Z)-octadienoyl-CoA = (2E,5Z)-octadienoyl-CoA. It catalyses the reaction (3S)-hydroxydecanoyl-CoA + NAD(+) = 3-oxodecanoyl-CoA + NADH + H(+). The enzyme catalyses (3E)-decenoyl-CoA = (2E)-decenoyl-CoA. It carries out the reaction (3Z)-hexenoyl-CoA = (2E)-hexenoyl-CoA. The catalysed reaction is (3E)-hexenoyl-CoA = (2E)-hexenoyl-CoA. It catalyses the reaction (3S)-hydroxydecanoyl-CoA = (2E)-decenoyl-CoA + H2O. The enzyme catalyses (3S)-hydroxyhexanoyl-CoA = (2E)-hexenoyl-CoA + H2O. It participates in lipid metabolism; fatty acid beta-oxidation. Its activity is regulated as follows. Enzyme activity enhanced by acetylation. Its function is as follows. Peroxisomal trifunctional enzyme possessing 2-enoyl-CoA hydratase, 3-hydroxyacyl-CoA dehydrogenase, and delta 3, delta 2-enoyl-CoA isomerase activities. Catalyzes two of the four reactions of the long chain fatty acids peroxisomal beta-oxidation pathway. Can also use branched-chain fatty acids such as 2-methyl-2E-butenoyl-CoA as a substrate, which is hydrated into (2S,3S)-3-hydroxy-2-methylbutanoyl-CoA. Optimal isomerase for 2,5 double bonds into 3,5 form isomerization in a range of enoyl-CoA species. Also able to isomerize both 3-cis and 3-trans double bonds into the 2-trans form in a range of enoyl-CoA species. With HSD17B4, catalyzes the hydration of trans-2-enoyl-CoA and the dehydrogenation of 3-hydroxyacyl-CoA, but with opposite chiral specificity. Regulates the amount of medium-chain dicarboxylic fatty acids which are essential regulators of all fatty acid oxidation pathways. Also involved in the degradation of long-chain dicarboxylic acids through peroxisomal beta-oxidation. This chain is Peroxisomal bifunctional enzyme, found in Homo sapiens (Human).